Here is a 182-residue protein sequence, read N- to C-terminus: Regulatory protein RecX (182 aa).

Positions 12–54 (LSQRDHSESELRRKLAAPPFSAKGNWGKRSGAKSSNLVESNPV) are disordered. Over residues 13-24 (SQRDHSESELRR) the composition is skewed to basic and acidic residues. Over residues 43–54 (AKSSNLVESNPV) the composition is skewed to polar residues.

This sequence belongs to the RecX family.

Its subcellular location is the cytoplasm. Functionally, modulates RecA activity. This Yersinia pseudotuberculosis serotype I (strain IP32953) protein is Regulatory protein RecX.